We begin with the raw amino-acid sequence, 349 residues long: Protein O-mannose kinase (349 aa).

Topologically, residues 1-19 (MGQQHGTRNGLTHRELPRG) are cytoplasmic. The helical; Signal-anchor for type II membrane protein transmembrane segment at 20–42 (VGLLLAMALMNVALYLCLDQLFI) threads the bilayer. Over 43–349 (SPGRSTADSR…TVMSQTKEML (307 aa)) the chain is Lumenal. Residues Asn-66, Asn-164, and Asn-219 are each glycosylated (N-linked (GlcNAc...) asparagine). The 270-residue stretch at 80–349 (VRQLKRVGEG…TVMSQTKEML (270 aa)) folds into the Protein kinase domain.

Belongs to the protein kinase superfamily. Ser/Thr protein kinase family. STKL subfamily.

It is found in the endoplasmic reticulum membrane. It carries out the reaction 3-O-[beta-D-GalNAc-(1-&gt;3)-beta-D-GlcNAc-(1-&gt;4)-alpha-D-Man]-L-Thr-[protein] + ATP = 3-O-[beta-D-GalNAc-(1-&gt;3)-beta-D-GlcNAc-(1-&gt;4)-(O-6-P-alpha-D-Man)]-Thr-[protein] + ADP + H(+). In terms of biological role, protein O-mannose kinase that specifically mediates phosphorylation at the 6-position of an O-mannose of the trisaccharide (N-acetylgalactosamine (GalNAc)-beta-1,3-N-acetylglucosamine (GlcNAc)-beta-1,4-mannose) to generate phosphorylated O-mannosyl trisaccharide (N-acetylgalactosamine-beta-1,3-N-acetylglucosamine-beta-1,4-(phosphate-6-)mannose). Phosphorylated O-mannosyl trisaccharide is a carbohydrate structure present in alpha-dystroglycan (DAG1), which is required for binding laminin G-like domain-containing extracellular proteins with high affinity. Only shows kinase activity when the GalNAc-beta-3-GlcNAc-beta-terminus is linked to the 4-position of O-mannose, suggesting that this disaccharide serves as the substrate recognition motif. This Mus musculus (Mouse) protein is Protein O-mannose kinase (Pomk).